Here is a 514-residue protein sequence, read N- to C-terminus: Retron Vc95 probable ATPase (514 aa).

Residues 92–99 (GNNGSGKS) carry the ATP-binding motif.

Probable ATPase component of antiviral defense system retron Vc95, composed of a non-coding RNA (ncRNA), a reverse transcriptase (RT), this protein and a putative HNH endonuclease. Expression of retron Vc95 confers protection against bacteriophages T2, T4 and T6. At multiplicity of infection (MOI) of 0.02 cultures slow growth when infected with T4 but do not collapse, at MOI 2 cultures enter growth stasis. The sequence is that of Retron Vc95 probable ATPase from Vibrio cholerae serotype O1 biovar El Tor.